Consider the following 221-residue polypeptide: Pectate lyase C (221 aa).

Residues 1-27 form the signal peptide; sequence MKKIVSILFMFGLVMGFSQFQPSTVFA.

It belongs to the polysaccharide lyase 3 family. Ca(2+) is required as a cofactor.

The protein localises to the secreted. The catalysed reaction is Eliminative cleavage of (1-&gt;4)-alpha-D-galacturonan to give oligosaccharides with 4-deoxy-alpha-D-galact-4-enuronosyl groups at their non-reducing ends.. The enzyme catalyses Eliminative cleavage of (1-&gt;4)-alpha-D-galacturonan methyl ester to give oligosaccharides with 4-deoxy-6-O-methyl-alpha-D-galact-4-enuronosyl groups at their non-reducing ends.. Its pathway is glycan metabolism; pectin degradation; 2-dehydro-3-deoxy-D-gluconate from pectin: step 2/5. Catalyzes the depolymerization of both polygalacturonate and pectins of methyl esterification degree from 22 to 89%, with an endo mode of action. In contrast to the majority of pectate lyases, displays high activity on highly methylated pectins. Is also able to cleave trigalacturonate to galacturonic acid and unsaturated digalacturonate. The polypeptide is Pectate lyase C (pelC) (Bacillus subtilis (strain 168)).